Consider the following 184-residue polypeptide: MEEQKQTPSTPTPDTAAEAAVNAATAAPETAGADDVAAQLAALEAKAREHYDMYVRAVAEGENIRRRAQEDVSKAHKFAIENFADNLLPVMDSLQAALADGSGDIAKLREGVELTARQLSAAFERGKIVELNPVGEKFDPHRHQAISMVPSEQESNTVVTVLQRGYTIADRVLRPALVTVSAPK.

The segment at 1-32 is disordered; it reads MEEQKQTPSTPTPDTAAEAAVNAATAAPETAG. Residues 12-32 are compositionally biased toward low complexity; the sequence is TPDTAAEAAVNAATAAPETAG.

This sequence belongs to the GrpE family. Homodimer.

The protein resides in the cytoplasm. In terms of biological role, participates actively in the response to hyperosmotic and heat shock by preventing the aggregation of stress-denatured proteins, in association with DnaK and GrpE. It is the nucleotide exchange factor for DnaK and may function as a thermosensor. Unfolded proteins bind initially to DnaJ; upon interaction with the DnaJ-bound protein, DnaK hydrolyzes its bound ATP, resulting in the formation of a stable complex. GrpE releases ADP from DnaK; ATP binding to DnaK triggers the release of the substrate protein, thus completing the reaction cycle. Several rounds of ATP-dependent interactions between DnaJ, DnaK and GrpE are required for fully efficient folding. This is Protein GrpE from Cupriavidus pinatubonensis (strain JMP 134 / LMG 1197) (Cupriavidus necator (strain JMP 134)).